The primary structure comprises 334 residues: Ribosomal RNA small subunit methyltransferase H (334 aa).

S-adenosyl-L-methionine-binding positions include 39-41 (GGH), Asp59, Phe83, Asp100, and Gln107. The interval 303–334 (ERTQAHGAERSDMRRAERPDARRAEHGEVLPP) is disordered.

This sequence belongs to the methyltransferase superfamily. RsmH family.

It is found in the cytoplasm. It catalyses the reaction cytidine(1402) in 16S rRNA + S-adenosyl-L-methionine = N(4)-methylcytidine(1402) in 16S rRNA + S-adenosyl-L-homocysteine + H(+). Its function is as follows. Specifically methylates the N4 position of cytidine in position 1402 (C1402) of 16S rRNA. This chain is Ribosomal RNA small subunit methyltransferase H, found in Verminephrobacter eiseniae (strain EF01-2).